Reading from the N-terminus, the 1589-residue chain is Paternally-expressed gene 3 protein (1589 aa).

Positions 46-128 (HQRFRNLIYV…TLLENYKEMY (83 aa)) constitute an SCAN box domain. Disordered stretches follow at residues 128–230 (YQPE…ESYQ), 266–306 (DGHS…RRGI), and 319–349 (KFIKDVSRSSKSGRARESSDRSQRFPRMSDD). The segment covering 129-142 (QPEDDNNSDVTSDD) has biased composition (acidic residues). Composition is skewed to basic and acidic residues over residues 143 to 152 (DMTRNRRESS), 161 to 182 (SGDRDWDRRGRSRDMEPRDRWS), 206 to 225 (FEMDRDDDRDSRAYESRSQD), and 295 to 306 (PEAKKSTHRRGI). 3 C2H2-type zinc fingers span residues 454-476 (YVCDECGRSFSVISEFVEHQIMH), 507-529 (FECKDCGETFNKSAALAEHRKIH), and 565-587 (YECRVCKETFLHSSALIEHQKIH). Over residues 588–607 (FGDDKDNEREHERERERGET) the composition is skewed to basic and acidic residues. Residues 588-610 (FGDDKDNEREHERERERGETFRP) are disordered. A C2H2-type 4 zinc finger spans residues 627–649 (YECKVCGETFLHSSSLKEHQKIH). Residues 838–930 (LVASKPPRSH…EFSVPSSNVR (93 aa)) form a disordered region. Residues 868–881 (LNDKRQKIPARENP) show a composition bias toward basic and acidic residues. The C2H2-type 5 zinc-finger motif lies at 969 to 991 (YECQECGECFAHSSDLTEHQKIH). Residues 1056–1104 (EKSHGEESQGENTDGEETHSEETHGQETIEDPVIQSSDMEDPQKDDPDD) are disordered. Basic and acidic residues predominate over residues 1071–1082 (EETHSEETHGQE). C2H2-type zinc fingers lie at residues 1107–1129 (YECEDCGLGFVDLTDLTDHQKVH), 1163–1185 (YECPKCGESFIHSSFLFEHQRIH), 1225–1247 (IRCLLCGQGFIHSSALNEHMRLH), 1282–1304 (FECAVCGESFVNPAELADHVTVH), and 1332–1354 (YECKDCGKSFIHSTVLTKHKELH). The span at 1396-1416 (AEPEVEAAEPEVEAAEPEVEA) shows a compositional bias: acidic residues. A disordered region spans residues 1396-1496 (AEPEVEAAEP…GIEDPEEGED (101 aa)). 7 tandem repeats follow at residues 1398-1404 (PEVEAAE), 1405-1411 (PEVEAAE), 1412-1418 (PEVEAAE), 1419-1423 (PNGEA), 1426-1430 (PDGEA), 1433-1437 (PIGEA), and 1440-1444 (PNGEA). The 3 X 7 AA repeat of P-E-V-E-A-A-E stretch occupies residues 1398 to 1418 (PEVEAAEPEVEAAEPEVEAAE). The segment at 1419–1444 (PNGEAEGPDGEAAEPIGEAGQPNGEA) is 4 X 5 AA repeat of P-X-G-E-A. Acidic residues-rich tracts occupy residues 1450 to 1467 (DADEPDGAGIEDPEERAE) and 1476 to 1496 (PEGDADEPDGVGIEDPEEGED). C2H2-type zinc fingers lie at residues 1506-1528 (YDCHECTETFTSSTAFGEHLKTH) and 1565-1587 (FKCDVCGQLFNDRLSLARHQNTH).

The protein belongs to the krueppel C2H2-type zinc-finger protein family. Homodimer. Interacts with SIAH1A and SIAH2. Interacts with TRAF2.

It localises to the nucleus. The protein resides in the cytoplasm. In terms of biological role, induces apoptosis in cooperation with SIAH1A. Acts as a mediator between p53/TP53 and BAX in a neuronal death pathway that is activated by DNA damage. Acts synergistically with TRAF2 and inhibits TNF induced apoptosis through activation of NF-kappa-B. The sequence is that of Paternally-expressed gene 3 protein (PEG3) from Gorilla gorilla gorilla (Western lowland gorilla).